We begin with the raw amino-acid sequence, 549 residues long: Rhodopsin kinase grk7a (549 aa).

S33 carries the phosphoserine modification. In terms of domain architecture, RGS spans 53–171; that stretch reads FESLCEKQPI…QASPFFDKFL (119 aa). Residues 186 to 449 form the Protein kinase domain; it reads FYEFRTLGKG…NDDPRKHEWF (264 aa). Residues 192 to 200 and K215 contribute to the ATP site; that span reads LGKGGFGEV. The active-site Proton acceptor is D311. Residues 450–515 enclose the AGC-kinase C-terminal domain; sequence KSINFARLEA…GAVSIAWQQE (66 aa). The segment at 522-549 is disordered; the sequence is FDELSDPNRKESSGGSDDDKKSGTCTLL. Positions 527-543 are enriched in basic and acidic residues; sequence DPNRKESSGGSDDDKKS. The residue at position 546 (C546) is a Cysteine methyl ester. C546 is lipidated: S-geranylgeranyl cysteine. Positions 547–549 are cleaved as a propeptide — removed in mature form; it reads TLL.

It belongs to the protein kinase superfamily. AGC Ser/Thr protein kinase family. GPRK subfamily. Post-translationally, phosphorylation at Ser-33 is regulated by light and activated by cAMP.

Its subcellular location is the membrane. The enzyme catalyses L-threonyl-[rhodopsin] + ATP = O-phospho-L-threonyl-[rhodopsin] + ADP + H(+). It catalyses the reaction L-seryl-[rhodopsin] + ATP = O-phospho-L-seryl-[rhodopsin] + ADP + H(+). Its function is as follows. Retina-specific kinase involved in the shutoff of the photoresponse and adaptation to changing light conditions via cone opsin phosphorylation, including rhodopsin (RHO). In Danio rerio (Zebrafish), this protein is Rhodopsin kinase grk7a (grk7a).